The following is a 168-amino-acid chain: 6,7-dimethyl-8-ribityllumazine synthase (168 aa).

5-amino-6-(D-ribitylamino)uracil contacts are provided by residues Trp-31, 65–67 (SFE), and 89–91 (CVV). Residue 94–95 (DT) participates in (2S)-2-hydroxy-3-oxobutyl phosphate binding. His-97 acts as the Proton donor in catalysis. Tyr-122 serves as a coordination point for 5-amino-6-(D-ribitylamino)uracil. Arg-136 is a binding site for (2S)-2-hydroxy-3-oxobutyl phosphate.

This sequence belongs to the DMRL synthase family.

The catalysed reaction is (2S)-2-hydroxy-3-oxobutyl phosphate + 5-amino-6-(D-ribitylamino)uracil = 6,7-dimethyl-8-(1-D-ribityl)lumazine + phosphate + 2 H2O + H(+). The protein operates within cofactor biosynthesis; riboflavin biosynthesis; riboflavin from 2-hydroxy-3-oxobutyl phosphate and 5-amino-6-(D-ribitylamino)uracil: step 1/2. Its function is as follows. Catalyzes the formation of 6,7-dimethyl-8-ribityllumazine by condensation of 5-amino-6-(D-ribitylamino)uracil with 3,4-dihydroxy-2-butanone 4-phosphate. This is the penultimate step in the biosynthesis of riboflavin. The chain is 6,7-dimethyl-8-ribityllumazine synthase from Phocaeicola vulgatus (strain ATCC 8482 / DSM 1447 / JCM 5826 / CCUG 4940 / NBRC 14291 / NCTC 11154) (Bacteroides vulgatus).